Reading from the N-terminus, the 583-residue chain is Protein cps3 (583 aa).

C3H1-type zinc fingers lie at residues 35 to 62 (SLQH…HDLE) and 64 to 91 (ATEK…HVLP). Disordered stretches follow at residues 318–346 (LGRP…NGST), 471–490 (KVSS…YNGT), and 504–532 (RQES…KNLG). 3 stretches are compositionally biased toward polar residues: residues 323-334 (KSPSVPTSVGSN), 475-490 (NLNS…YNGT), and 513-532 (PSLN…KNLG).

It localises to the cytoplasm. Its function is as follows. Responsible for supersensitivity to the spindle poison, isopropyl N-3-chlorophenyl carbamate. Has a role in meiosis. The chain is Protein cps3 (cps3) from Schizosaccharomyces pombe (strain 972 / ATCC 24843) (Fission yeast).